Reading from the N-terminus, the 551-residue chain is Thermophilic beta-amylase (551 aa).

The first 32 residues, methionine 1–alanine 32, serve as a signal peptide directing secretion. Substrate is bound at residue aspartate 73. Position 80 (glutamate 80) interacts with Ca(2+). Positions 113 and 121 each coordinate substrate. Glutamate 167 serves as a coordination point for Ca(2+). Glutamate 195 serves as the catalytic Proton donor. 3 residues coordinate substrate: lysine 310, histidine 315, and threonine 353. The Proton acceptor role is filled by glutamate 392. Residues asparagine 393–alanine 394 and arginine 423 contribute to the substrate site. Positions leucine 448 to asparagine 551 constitute a CBM20 domain.

This sequence belongs to the glycosyl hydrolase 14 family. In terms of assembly, monomer. The cofactor is Ca(2+).

It carries out the reaction Hydrolysis of (1-&gt;4)-alpha-D-glucosidic linkages in polysaccharides so as to remove successive maltose units from the non-reducing ends of the chains.. This chain is Thermophilic beta-amylase, found in Thermoanaerobacterium thermosulfurigenes (Clostridium thermosulfurogenes).